The sequence spans 326 residues: tRNA N6-adenosine threonylcarbamoyltransferase (326 aa).

Histidine 111 and histidine 115 together coordinate Fe cation. Substrate-binding positions include 134–138 (TVSGG), aspartate 167, glycine 180, aspartate 184, and asparagine 268. Residue aspartate 293 coordinates Fe cation.

It belongs to the KAE1 / TsaD family. Fe(2+) is required as a cofactor.

It is found in the cytoplasm. The enzyme catalyses L-threonylcarbamoyladenylate + adenosine(37) in tRNA = N(6)-L-threonylcarbamoyladenosine(37) in tRNA + AMP + H(+). Required for the formation of a threonylcarbamoyl group on adenosine at position 37 (t(6)A37) in tRNAs that read codons beginning with adenine. Is involved in the transfer of the threonylcarbamoyl moiety of threonylcarbamoyl-AMP (TC-AMP) to the N6 group of A37, together with TsaE and TsaB. TsaD likely plays a direct catalytic role in this reaction. The chain is tRNA N6-adenosine threonylcarbamoyltransferase from Dehalococcoides mccartyi (strain ATCC BAA-2100 / JCM 16839 / KCTC 5957 / BAV1).